Consider the following 218-residue polypeptide: Molybdenum cofactor guanylyltransferase (218 aa).

GTP-binding positions include 16-18 (LAG), Lys28, Asn56, Asp74, and Asp109. Mg(2+) is bound at residue Asp109.

The protein belongs to the MobA family. In terms of assembly, monomer. It depends on Mg(2+) as a cofactor.

The protein resides in the cytoplasm. The catalysed reaction is Mo-molybdopterin + GTP + H(+) = Mo-molybdopterin guanine dinucleotide + diphosphate. In terms of biological role, transfers a GMP moiety from GTP to Mo-molybdopterin (Mo-MPT) cofactor (Moco or molybdenum cofactor) to form Mo-molybdopterin guanine dinucleotide (Mo-MGD) cofactor. The polypeptide is Molybdenum cofactor guanylyltransferase (Sinorhizobium fredii (strain NBRC 101917 / NGR234)).